The sequence spans 353 residues: Photosystem II protein D1 (353 aa).

Residue threonine 2 is modified to N-acetylthreonine. Threonine 2 carries the phosphothreonine modification. 3 helical membrane-spanning segments follow: residues 29–46 (YIGW…TATS), 118–133 (HFLL…EWEL), and 142–156 (WIAV…AATA). Histidine 118 is a binding site for chlorophyll a. Residue tyrosine 126 participates in pheophytin a binding. Positions 170 and 189 each coordinate [CaMn4O5] cluster. A helical transmembrane segment spans residues 197 to 218 (FHMLGVAGVFGGSLFSAMHGSL). Histidine 198 contributes to the chlorophyll a binding site. A quinone-binding positions include histidine 215 and 264–265 (SF). Position 215 (histidine 215) interacts with Fe cation. Histidine 272 is a binding site for Fe cation. The helical transmembrane segment at 274–288 (FLAAWPVVGIWFTAL) threads the bilayer. Residues histidine 332, glutamate 333, aspartate 342, and alanine 344 each coordinate [CaMn4O5] cluster. Residues 345 to 353 (SVEAPSVNA) constitute a propeptide that is removed on maturation.

This sequence belongs to the reaction center PufL/M/PsbA/D family. PSII is composed of 1 copy each of membrane proteins PsbA, PsbB, PsbC, PsbD, PsbE, PsbF, PsbH, PsbI, PsbJ, PsbK, PsbL, PsbM, PsbT, PsbX, PsbY, PsbZ, Psb30/Ycf12, at least 3 peripheral proteins of the oxygen-evolving complex and a large number of cofactors. It forms dimeric complexes. The cofactor is The D1/D2 heterodimer binds P680, chlorophylls that are the primary electron donor of PSII, and subsequent electron acceptors. It shares a non-heme iron and each subunit binds pheophytin, quinone, additional chlorophylls, carotenoids and lipids. D1 provides most of the ligands for the Mn4-Ca-O5 cluster of the oxygen-evolving complex (OEC). There is also a Cl(-1) ion associated with D1 and D2, which is required for oxygen evolution. The PSII complex binds additional chlorophylls, carotenoids and specific lipids.. In terms of processing, tyr-161 forms a radical intermediate that is referred to as redox-active TyrZ, YZ or Y-Z. C-terminally processed by CTPA; processing is essential to allow assembly of the oxygen-evolving complex and thus photosynthetic growth.

It localises to the plastid. The protein resides in the chloroplast thylakoid membrane. It catalyses the reaction 2 a plastoquinone + 4 hnu + 2 H2O = 2 a plastoquinol + O2. In terms of biological role, photosystem II (PSII) is a light-driven water:plastoquinone oxidoreductase that uses light energy to abstract electrons from H(2)O, generating O(2) and a proton gradient subsequently used for ATP formation. It consists of a core antenna complex that captures photons, and an electron transfer chain that converts photonic excitation into a charge separation. The D1/D2 (PsbA/PsbD) reaction center heterodimer binds P680, the primary electron donor of PSII as well as several subsequent electron acceptors. The polypeptide is Photosystem II protein D1 (Oltmannsiellopsis viridis (Marine flagellate)).